Here is a 271-residue protein sequence, read N- to C-terminus: MSAPRPVYDPSWDRANPNEVRRSIRERGYTGYTAGLAPGFVQANICILPKDWAEDFLLFCQRNPKPCPLLTRSDVGDPSLPALSDNIDIRTDVPRYQIFRNGEFTEEVTDIRSHWRDDLVTFAFGCSFSFEEALQDDGIPLRFLANNNVAGVYVSTMPTEAAGPFEAPLIVTMRSFTPQNAIRAIQITSRFPNVHGAPVHIGDPAQIGVDLAKRYQNVGDPTVGEGEIPVFWACGLTPQFAVMKAKPPFCITHAPSSMLVTDLRNSSLAVM.

Belongs to the D-glutamate cyclase family.

This Afipia carboxidovorans (strain ATCC 49405 / DSM 1227 / KCTC 32145 / OM5) (Oligotropha carboxidovorans) protein is Putative hydro-lyase OCAR_7359/OCA5_c07590.